The sequence spans 417 residues: Serine hydroxymethyltransferase (417 aa).

(6S)-5,6,7,8-tetrahydrofolate contacts are provided by residues L121 and 125 to 127 (GHL). The residue at position 229 (K229) is an N6-(pyridoxal phosphate)lysine. Residue 355 to 357 (SPF) participates in (6S)-5,6,7,8-tetrahydrofolate binding.

It belongs to the SHMT family. As to quaternary structure, homodimer. The cofactor is pyridoxal 5'-phosphate.

The protein resides in the cytoplasm. It catalyses the reaction (6R)-5,10-methylene-5,6,7,8-tetrahydrofolate + glycine + H2O = (6S)-5,6,7,8-tetrahydrofolate + L-serine. It functions in the pathway one-carbon metabolism; tetrahydrofolate interconversion. Its pathway is amino-acid biosynthesis; glycine biosynthesis; glycine from L-serine: step 1/1. In terms of biological role, catalyzes the reversible interconversion of serine and glycine with tetrahydrofolate (THF) serving as the one-carbon carrier. This reaction serves as the major source of one-carbon groups required for the biosynthesis of purines, thymidylate, methionine, and other important biomolecules. Also exhibits THF-independent aldolase activity toward beta-hydroxyamino acids, producing glycine and aldehydes, via a retro-aldol mechanism. This is Serine hydroxymethyltransferase from Shewanella denitrificans (strain OS217 / ATCC BAA-1090 / DSM 15013).